We begin with the raw amino-acid sequence, 126 residues long: MPNTYGSRTLTEWLTLVLGVVIILVGLFFVIAGADLAMLGGSVYYVICGIPLVAGGVFMLMGRTLGAFLYLGALAYTWVWSLWEVGFSPVDLLPRDFGPTLLGILVALTIPVLRRMETRRTLRGTV.

4 helical membrane-spanning segments follow: residues 13–33, 41–61, 67–87, and 92–112; these read WLTL…VIAG, GSVY…FMLM, AFLY…EVGF, and LLPR…TIPV.

The protein localises to the cell membrane. It carries out the reaction glycerol + A = dihydroxyacetone + AH2. Its function is as follows. Catalyzes the oxidation of glycerol to glycerone. Also acts, more slowly, on a number of other polyols including D-sorbitol, D-arabinitol, D-mannitol, meso-erythritol, adonitol and propylene glycol. This chain is Glycerol dehydrogenase small subunit (sldB), found in Gluconobacter oxydans (strain 621H) (Gluconobacter suboxydans).